The sequence spans 238 residues: Urease subunit alpha (238 aa).

The segment at methionine 1 to alanine 102 is urease gamma. A urease beta region spans residues asparagine 103–glutamate 238.

It in the N-terminal section; belongs to the urease gamma subunit family. This sequence in the C-terminal section; belongs to the urease beta subunit family. As to quaternary structure, heterohexamer of 3 UreA (alpha) and 3 UreB (beta) subunits. Four heterohexamers assemble to form a 16 nm dodecameric complex.

The enzyme catalyses urea + 2 H2O + H(+) = hydrogencarbonate + 2 NH4(+). It functions in the pathway nitrogen metabolism; urea degradation; CO(2) and NH(3) from urea (urease route): step 1/1. The sequence is that of Urease subunit alpha from Helicobacter pylori (strain J99 / ATCC 700824) (Campylobacter pylori J99).